The chain runs to 143 residues: Putative pre-16S rRNA nuclease (143 aa).

This sequence belongs to the YqgF nuclease family.

The protein localises to the cytoplasm. Its function is as follows. Could be a nuclease involved in processing of the 5'-end of pre-16S rRNA. The sequence is that of Putative pre-16S rRNA nuclease from Lactococcus lactis subsp. cremoris (strain MG1363).